Reading from the N-terminus, the 78-residue chain is UPF0349 protein ABC2936 (78 aa).

Belongs to the UPF0349 family.

The protein is UPF0349 protein ABC2936 of Shouchella clausii (strain KSM-K16) (Alkalihalobacillus clausii).